The sequence spans 1164 residues: Phytochrome D (1164 aa).

The tract at residues 1–55 is disordered; sequence MVSGGGSKTSGGEAASSGHRRSRHTSAAEQAQSSANKALRSQNQQPQNHGGGTES. Over residues 25 to 55 the composition is skewed to polar residues; the sequence is TSAAEQAQSSANKALRSQNQQPQNHGGGTES. The 183-residue stretch at 255–437 folds into the GAF domain; the sequence is DIKLLCDTVV…AFGLQLNMEL (183 aa). Cysteine 360 contacts phytochromobilin. 2 PAS domains span residues 656–727 and 790–861; these read VARE…LKGD and DYKA…MIVL. In terms of domain architecture, Histidine kinase spans 938–1157; the sequence is YIFQVIKNPL…LIVIELPVPL (220 aa).

This sequence belongs to the phytochrome family. Homodimer. In terms of processing, contains one covalently linked phytochromobilin chromophore.

Its function is as follows. Regulatory photoreceptor which exists in two forms that are reversibly interconvertible by light: the Pr form that absorbs maximally in the red region of the spectrum and the Pfr form that absorbs maximally in the far-red region. Photoconversion of Pr to Pfr induces an array of morphogenic responses, whereas reconversion of Pfr to Pr cancels the induction of those responses. Pfr controls the expression of a number of nuclear genes including those encoding the small subunit of ribulose-bisphosphate carboxylase, chlorophyll A/B binding protein, protochlorophyllide reductase, rRNA, etc. It also controls the expression of its own gene(s) in a negative feedback fashion. The chain is Phytochrome D (PHYD) from Arabidopsis thaliana (Mouse-ear cress).